Here is a 317-residue protein sequence, read N- to C-terminus: Pantothenate kinase (317 aa).

95–102 (GSVAVGKS) contacts ATP.

This sequence belongs to the prokaryotic pantothenate kinase family.

It localises to the cytoplasm. It carries out the reaction (R)-pantothenate + ATP = (R)-4'-phosphopantothenate + ADP + H(+). It participates in cofactor biosynthesis; coenzyme A biosynthesis; CoA from (R)-pantothenate: step 1/5. The chain is Pantothenate kinase from Myxococcus xanthus (strain DK1622).